The primary structure comprises 380 residues: Cytochrome b (380 aa).

Helical transmembrane passes span 34-54, 78-99, 114-134, and 179-199; these read FGSLLGICLATQILTGLLLAA, WLIRNLHANGASFFFICIYLHI, WNTGIILLLTLMATAFVGYVL, and FFTLHFLLPFMIAGLTLIHLT. Heme b contacts are provided by His-84 and His-98. Residues His-183 and His-197 each coordinate heme b. His-202 contributes to the a ubiquinone binding site. Helical transmembrane passes span 227–247, 289–309, 321–341, and 348–368; these read TKDILGFILLLLPLTTLALFS, LGGVLALAASVLILFLIPLLH, LSQLLFWTLVANLTILTWIGS, and FIIIGQLASLTYFTILLILFP.

It belongs to the cytochrome b family. As to quaternary structure, the cytochrome bc1 complex contains 11 subunits: 3 respiratory subunits (MT-CYB, CYC1 and UQCRFS1), 2 core proteins (UQCRC1 and UQCRC2) and 6 low-molecular weight proteins (UQCRH/QCR6, UQCRB/QCR7, UQCRQ/QCR8, UQCR10/QCR9, UQCR11/QCR10 and a cleavage product of UQCRFS1). This cytochrome bc1 complex then forms a dimer. Heme b is required as a cofactor.

Its subcellular location is the mitochondrion inner membrane. In terms of biological role, component of the ubiquinol-cytochrome c reductase complex (complex III or cytochrome b-c1 complex) that is part of the mitochondrial respiratory chain. The b-c1 complex mediates electron transfer from ubiquinol to cytochrome c. Contributes to the generation of a proton gradient across the mitochondrial membrane that is then used for ATP synthesis. This chain is Cytochrome b (MT-CYB), found in Eudyptes chrysocome (Western rockhopper penguin).